A 161-amino-acid chain; its full sequence is E3 ubiquitin ligase complex SCF subunit sconC (161 aa).

Residues 102-161 (ILAANYLDIKPLLDIGCKTVANMIKGKSPEEIRKTFNIQNDFTPEEEDQIRRENEWAEDR) are interaction with the F-box domain of F-box proteins.

It belongs to the SKP1 family. As to quaternary structure, component of the SCF (SKP1-CUL1-F-box protein) E3 ubiquitin ligase complexes.

The protein operates within protein modification; protein ubiquitination. In terms of biological role, essential component of the SCF (SKP1-CUL1-F-box protein) E3 ubiquitin ligase complexes, which mediate the ubiquitination and subsequent proteasomal degradation of target proteins. Controls sulfur metabolite repression, probably by mediating the inactivation or degradation of the metR transcription factor. The sequence is that of E3 ubiquitin ligase complex SCF subunit sconC (sconC) from Emericella nidulans (strain FGSC A4 / ATCC 38163 / CBS 112.46 / NRRL 194 / M139) (Aspergillus nidulans).